The following is a 344-amino-acid chain: Homoserine O-acetyltransferase (344 aa).

C142 functions as the Acyl-thioester intermediate in the catalytic mechanism. Residues K163 and S192 each coordinate substrate. H235 serves as the catalytic Proton acceptor. E237 is an active-site residue. R249 lines the substrate pocket.

The protein belongs to the MetA family.

The protein localises to the cytoplasm. The enzyme catalyses L-homoserine + acetyl-CoA = O-acetyl-L-homoserine + CoA. It participates in amino-acid biosynthesis; L-methionine biosynthesis via de novo pathway; O-acetyl-L-homoserine from L-homoserine: step 1/1. Transfers an acetyl group from acetyl-CoA to L-homoserine, forming acetyl-L-homoserine. The sequence is that of Homoserine O-acetyltransferase from Bifidobacterium adolescentis (strain ATCC 15703 / DSM 20083 / NCTC 11814 / E194a).